The primary structure comprises 196 residues: Large ribosomal subunit protein uL11m (196 aa).

Belongs to the universal ribosomal protein uL11 family. In terms of assembly, component of the mitochondrial ribosome large subunit (39S) which comprises a 16S rRNA and about 50 distinct proteins.

It is found in the mitochondrion. The chain is Large ribosomal subunit protein uL11m (mRpL11) from Drosophila melanogaster (Fruit fly).